The following is a 201-amino-acid chain: uncharacterized protein (201 aa).

A compositionally biased stretch (acidic residues) spans 64–78 (DNEIKEEEESEEEEK). 2 disordered regions span residues 64–114 (DNEI…FKNA) and 182–201 (ILPG…LSKQ). Positions 96–106 (RNKHGRNRNPR) are enriched in basic residues. Polar residues predominate over residues 189–201 (GNTETVDQGLSKQ).

This is an uncharacterized protein from Ostreid herpesvirus 1 (isolate France) (OsHV-1).